The primary structure comprises 275 residues: Elongation factor Ts (275 aa).

The involved in Mg(2+) ion dislocation from EF-Tu stretch occupies residues 76–79; sequence TDFV.

This sequence belongs to the EF-Ts family.

It is found in the cytoplasm. Functionally, associates with the EF-Tu.GDP complex and induces the exchange of GDP to GTP. It remains bound to the aminoacyl-tRNA.EF-Tu.GTP complex up to the GTP hydrolysis stage on the ribosome. The sequence is that of Elongation factor Ts from Corynebacterium glutamicum (strain R).